Reading from the N-terminus, the 271-residue chain is Ribosomal RNA small subunit methyltransferase A (271 aa).

Residues H18, L20, G45, E66, D91, and N113 each coordinate S-adenosyl-L-methionine.

The protein belongs to the class I-like SAM-binding methyltransferase superfamily. rRNA adenine N(6)-methyltransferase family. RsmA subfamily.

Its subcellular location is the cytoplasm. The catalysed reaction is adenosine(1518)/adenosine(1519) in 16S rRNA + 4 S-adenosyl-L-methionine = N(6)-dimethyladenosine(1518)/N(6)-dimethyladenosine(1519) in 16S rRNA + 4 S-adenosyl-L-homocysteine + 4 H(+). Specifically dimethylates two adjacent adenosines (A1518 and A1519) in the loop of a conserved hairpin near the 3'-end of 16S rRNA in the 30S particle. May play a critical role in biogenesis of 30S subunits. This Baumannia cicadellinicola subsp. Homalodisca coagulata protein is Ribosomal RNA small subunit methyltransferase A.